Reading from the N-terminus, the 82-residue chain is Beta-defensin 113 (82 aa).

Residues 1-16 form the signal peptide; that stretch reads MKILCIFLTFVFTVSC. Disulfide bonds link cysteine 35–cysteine 61, cysteine 42–cysteine 56, and cysteine 46–cysteine 62.

Belongs to the beta-defensin family.

It localises to the secreted. Its function is as follows. Has antibacterial activity. The sequence is that of Beta-defensin 113 (DEFB113) from Homo sapiens (Human).